We begin with the raw amino-acid sequence, 499 residues long: Bifunctional purine biosynthesis protein PurH (499 aa).

The 144-residue stretch at 1 to 144 (MIKRALISVF…KNFKDVVVLT (144 aa)) folds into the MGS-like domain.

The protein belongs to the PurH family.

It carries out the reaction (6R)-10-formyltetrahydrofolate + 5-amino-1-(5-phospho-beta-D-ribosyl)imidazole-4-carboxamide = 5-formamido-1-(5-phospho-D-ribosyl)imidazole-4-carboxamide + (6S)-5,6,7,8-tetrahydrofolate. The catalysed reaction is IMP + H2O = 5-formamido-1-(5-phospho-D-ribosyl)imidazole-4-carboxamide. Its pathway is purine metabolism; IMP biosynthesis via de novo pathway; 5-formamido-1-(5-phospho-D-ribosyl)imidazole-4-carboxamide from 5-amino-1-(5-phospho-D-ribosyl)imidazole-4-carboxamide (10-formyl THF route): step 1/1. The protein operates within purine metabolism; IMP biosynthesis via de novo pathway; IMP from 5-formamido-1-(5-phospho-D-ribosyl)imidazole-4-carboxamide: step 1/1. In Clostridium botulinum (strain Okra / Type B1), this protein is Bifunctional purine biosynthesis protein PurH.